The primary structure comprises 439 residues: Glutamate-1-semialdehyde 2,1-aminomutase (439 aa).

K279 carries the post-translational modification N6-(pyridoxal phosphate)lysine.

This sequence belongs to the class-III pyridoxal-phosphate-dependent aminotransferase family. HemL subfamily. As to quaternary structure, homodimer. Requires pyridoxal 5'-phosphate as cofactor.

The protein resides in the cytoplasm. It catalyses the reaction (S)-4-amino-5-oxopentanoate = 5-aminolevulinate. The protein operates within porphyrin-containing compound metabolism; protoporphyrin-IX biosynthesis; 5-aminolevulinate from L-glutamyl-tRNA(Glu): step 2/2. In Rhodopirellula baltica (strain DSM 10527 / NCIMB 13988 / SH1), this protein is Glutamate-1-semialdehyde 2,1-aminomutase.